A 197-amino-acid chain; its full sequence is TLE family member 5 (197 aa).

The segment at 166–197 (LSALGSQAHLSKEDKNGHDGDTHQEDDGEKSD) is CCN domain. A disordered region spans residues 174-197 (HLSKEDKNGHDGDTHQEDDGEKSD). Basic and acidic residues predominate over residues 175–197 (LSKEDKNGHDGDTHQEDDGEKSD). A Phosphoserine modification is found at Ser196.

This sequence belongs to the WD repeat Groucho/TLE family. In terms of assembly, homooligomer and heterooligomer with other family members. Binds TCF7. Binds the NF-kappa-B subunit RELA. Interacts with PHF12. Interacts (via Q domain) with SIX3. Interacts with SIX6. In terms of processing, ubiquitinated by XIAP/BIRC4. In terms of tissue distribution, found predominantly in muscle, heart and Placenta. In fetal tissues, abundantly expressed in the heart, lung, kidney, brain and liver.

Its subcellular location is the nucleus. Transcriptional corepressor. Acts as a dominant repressor towards other family members. Inhibits NF-kappa-B-regulated gene expression. May be required for the initiation and maintenance of the differentiated state. Essential for the transcriptional repressor activity of SIX3 during retina and lens development. The polypeptide is TLE family member 5 (Homo sapiens (Human)).